The following is a 299-amino-acid chain: Taste receptor type 2 member 50 (299 aa).

Position 1 (methionine 1) is a topological domain, extracellular. Residues 2–22 form a helical membrane-spanning segment; the sequence is ITFLYIFFSILIMVLFVLGNF. Residues 23-55 are Cytoplasmic-facing; the sequence is ANGFIALVNFIDWVKRKKISSADQILTALAVSR. Residues 56–76 traverse the membrane as a helical segment; it reads IGLLWTLLLNWYLTVLNPAFY. At 77-87 the chain is on the extracellular side; sequence SVELRITSYNA. Residues 88 to 108 form a helical membrane-spanning segment; that stretch reads WVVTNHFSMWLAASLSIFYLL. Topologically, residues 109 to 126 are cytoplasmic; it reads KIANFSNLIFLHLKRRVR. The helical transmembrane segment at 127–147 threads the bilayer; the sequence is SVILVILLGTLIFLVCHLLVA. Residues 148–181 are Extracellular-facing; the sequence is NMDESMWAEEYEGNITGKMKLRNTVHLSYLTVTT. N-linked (GlcNAc...) asparagine glycosylation is present at asparagine 161. A helical membrane pass occupies residues 182 to 202; the sequence is LWSFIPFTLSLISFLMLICSL. The Cytoplasmic portion of the chain corresponds to 203–229; that stretch reads CKHLKKMQLHGEGSQDLSTKVHIKALQ. A helical transmembrane segment spans residues 230 to 250; that stretch reads TLISFLLLCAIFFLFLIISVW. Residues 251–259 are Extracellular-facing; that stretch reads SPRRLRNDP. Residues 260–280 form a helical membrane-spanning segment; sequence VVMVSKAVGNIYLAFDSFILI. Residues 281-299 lie on the Cytoplasmic side of the membrane; it reads WRTKKLKHTFLLILCQIRC.

This sequence belongs to the G-protein coupled receptor T2R family.

It is found in the membrane. Functionally, receptor that may play a role in the perception of bitterness and is gustducin-linked. May play a role in sensing the chemical composition of the gastrointestinal content. The activity of this receptor may stimulate alpha gustducin, mediate PLC-beta-2 activation and lead to the gating of TRPM5. The protein is Taste receptor type 2 member 50 (TAS2R50) of Pan paniscus (Pygmy chimpanzee).